Reading from the N-terminus, the 201-residue chain is MSTARFIKCVTVGDGAVGKTCMLISYTSNTFPTDYVPTVFDNFSANVVVDGSTVNLGLWDTAGQEDYNRLRPLSYRGADVFLLAFSLISKASYENIHKKWLPELKHYAPGIPIVLVGTKLDLRDDKQFLKDHPGAASITTAQGEELRKMIGAVRYLECSSKTQQNVKAVFDTAIRVALRPPKAKKKIKPLKTKRSRICFFL.

Residue 13–20 coordinates GTP; sequence GDGAVGKT. The Effector region motif lies at 35 to 43; the sequence is YVPTVFDNF. GTP-binding positions include 60–64 and 118–121; these read DTAGQ and TKLD. A Cysteine methyl ester modification is found at Cys-198. Residue Cys-198 is the site of S-geranylgeranyl cysteine attachment. A propeptide spans 199 to 201 (removed in mature form); sequence FFL.

The protein belongs to the small GTPase superfamily. Rho family. In terms of tissue distribution, expressed exclusively in the root, hypocotyl and stem.

Its subcellular location is the cytoplasm. The protein resides in the membrane. In terms of biological role, inactive GDP-bound Rho GTPases reside in the cytosol, are found in a complex with Rho GDP-dissociation inhibitors (Rho GDIs), and are released from the GDI protein in order to translocate to membranes upon activation. The polypeptide is Rac-like GTP-binding protein ARAC2 (ARAC2) (Arabidopsis thaliana (Mouse-ear cress)).